The chain runs to 384 residues: Probable endopolygalacturonase C (384 aa).

Positions 1 to 19 (MVRQLILISSLLAAVAVRA) are cleaved as a signal peptide. Residues 20–40 (APADPAHPMVTEAPDVNLVEK) constitute a propeptide that is removed on maturation. Cys-45 and Cys-63 are disulfide-bonded. PbH1 repeat units follow at residues 176–207 (STDL…DIGE) and 208–229 (STYI…AINS). Asp-222 (proton donor) is an active-site residue. A disulfide bridge links Cys-224 with Cys-240. The active site involves His-244. PbH1 repeat units lie at residues 254–280 (RDDN…RIKT) and 288–310 (VSEV…VIEQ). An N-linked (GlcNAc...) asparagine glycan is attached at Asn-261. Intrachain disulfides connect Cys-349-Cys-354 and Cys-373-Cys-382.

It belongs to the glycosyl hydrolase 28 family.

Its subcellular location is the secreted. The catalysed reaction is (1,4-alpha-D-galacturonosyl)n+m + H2O = (1,4-alpha-D-galacturonosyl)n + (1,4-alpha-D-galacturonosyl)m.. Involved in maceration and soft-rotting of plant tissue. Hydrolyzes the 1,4-alpha glycosidic bonds of de-esterified pectate in the smooth region of the plant cell wall. This Aspergillus niger (strain ATCC MYA-4892 / CBS 513.88 / FGSC A1513) protein is Probable endopolygalacturonase C (pgaC).